Reading from the N-terminus, the 1088-residue chain is Extended synaptotagmin-1 (1088 aa).

N-acetylmethionine is present on M1. Over 1–30 (MERSPEEGAGPEPSGQSPATDSTRERDGGS) the chain is Cytoplasmic. A disordered region spans residues 1-38 (MERSPEEGAGPEPSGQSPATDSTRERDGGSGVPPAGPG). The helical transmembrane segment at 31–51 (GVPPAGPGAASEALAVLTSFG) threads the bilayer. Residues 52 to 54 (RRL) are Lumenal-facing. Residues 55-75 (LVLVPVYLAGAAGLSVGFVLF) traverse the membrane as a helical segment. Residues 76 to 1088 (GLALYLGWRR…LIDDRDKGGS (1013 aa)) lie on the Cytoplasmic side of the membrane. An SMP-LTD domain is found at 127–305 (DVEKAEWLNK…LPNRLLVPLV (179 aa)). 4 C2 domains span residues 304–425 (LVPD…DNWY), 446–572 (DAEK…QLSS), 618–740 (DAPP…DEWL), and 771–888 (QVNS…ALSG). S316 is modified (phosphoserine; by CDK5). Ca(2+) contacts are provided by K336, D337, D349, D396, D398, D400, D402, and D403. Residues 599–630 (TEPGAQDWDSESPETGSSVDAPPRPYHTTPNS) are disordered. N6-acetyllysine is present on K806. S809 is modified (phosphoserine). A disordered region spans residues 911–930 (HSHSSSSLNEEPEVLGDPTH). Phosphoserine is present on residues S933 and S947. One can recognise a C2 5 domain in the interval 955-1077 (PLGQVKLTVW…DLSQGAAQWY (123 aa)). Position 993 is a phosphotyrosine (Y993). The segment at 1002–1009 (KNRGTKRK) is required for phosphatidylinositol 4,5-bisphosphate-dependent location at the cell membrane.

It belongs to the extended synaptotagmin family. Interacts with ESYT2 and ESYT3. Interacts with ADGRD1; inhibiting the G-protein-coupled receptor activity of ADGRD1. Interaction with ADGRD1 is abolished when cytosolic calcium increases, relieving ADGRD1 G-protein-coupled receptor activity. Interacts (phosphorylated form) with SLC2A4. Phosphorylated on Ser residues in insulin-treated adipocytes (in vitro); this promotes interaction with SLC2A4. Ubiquitously expressed with a higher expression in spleen and white adipose tissue.

The protein resides in the endoplasmic reticulum membrane. It localises to the cell membrane. Binds calcium (via the C2 domains) and translocates to sites of contact between the endoplasmic reticulum and the cell membrane in response to increased cytosolic calcium levels. Helps tether the endoplasmic reticulum to the cell membrane and promotes the formation of appositions between the endoplasmic reticulum and the cell membrane. Acts as an inhibitor of ADGRD1 G-protein-coupled receptor activity in absence of cytosolic calcium. Binds glycerophospholipids in a barrel-like domain and may play a role in cellular lipid transport. In Rattus norvegicus (Rat), this protein is Extended synaptotagmin-1 (Esyt1).